A 280-amino-acid chain; its full sequence is Ribosomal RNA-processing protein 7 homolog A (280 aa).

Positions 59–159 (RTLFVLNVPP…SGIHKWISDY (101 aa)) constitute an RRM domain. Serine 99 carries the post-translational modification Phosphoserine.

Belongs to the RRP7 family. In terms of assembly, part of the small subunit (SSU) processome, composed of more than 70 proteins and the RNA chaperone small nucleolar RNA (snoRNA) U3. Interacts with NOL6; required for NOL6 localization to nucleolus. As to expression, expressed in the apical radial glial cells in the developing brain.

It localises to the nucleus. Its subcellular location is the nucleolus. The protein resides in the cell projection. It is found in the cilium. The protein localises to the cytoplasm. It localises to the cytoskeleton. Its subcellular location is the microtubule organizing center. The protein resides in the centrosome. In terms of biological role, nucleolar protein that is involved in ribosomal RNA (rRNA) processing. Also plays a role in primary cilia resorption, and cell cycle progression in neurogenesis and neocortex development. Part of the small subunit (SSU) processome, first precursor of the small eukaryotic ribosomal subunit. During the assembly of the SSU processome in the nucleolus, many ribosome biogenesis factors, an RNA chaperone and ribosomal proteins associate with the nascent pre-rRNA and work in concert to generate RNA folding, modifications, rearrangements and cleavage as well as targeted degradation of pre-ribosomal RNA by the RNA exosome. The sequence is that of Ribosomal RNA-processing protein 7 homolog A from Homo sapiens (Human).